Reading from the N-terminus, the 614-residue chain is MPAYRSRTSTHGRNMAGARSLWRATGMKNEDFGKPIIAVVNSFTQFVPGHVHLKDLGQLVAREIEKAGGIAKEFNTIAIDDGIAMGHDGMLYSLPSRELIADSVEYMVNGHCADAMVCISNCDKITPGMLMASLRLNIPSVFVSGGPMEAGKVVLSTGARKVDLIDAMVSAADDSMSDADVAVMEENACPTCGSCSGMFTANSMNCLTEALGLSLPGNGSVLATHADRQRLFVEAGHLIVDITRRYYEQNDDSVLPRNVASFAAFENAMSLDIAMGGSTNTVLHLLAAAQEGEVNFTMTDIDRLSRRVPCLCKVAPSVATVHMEDVHRAGGIMSILGQLDAAGLLNGDTKTVHATSLRAAIDRWDISRTNSDSVRQFYLAAPGGVPSQTAFSQSQRWDSLDTDRENGVIRSKAHAFSQDGGLAVLFGNIALDGCIVKTAGVDDSILKFSGPAVVYESQDDAVNGILTGKVKEGDVVVIRYEGPRGGPGMQEMLYPTSYLKSKGLGKACALITDGRFSGGTSGLSIGHCSPEAAEGGTIGLVETGDMIDIDIPNRGINLRVSDAVLAERRKAMEAKGKDAWKPVAPRKRKISSALKAYALFASSAAKGAVRVLKD.

Position 81 (Asp-81) interacts with Mg(2+). Position 122 (Cys-122) interacts with [2Fe-2S] cluster. Residues Asp-123 and Lys-124 each coordinate Mg(2+). Residue Lys-124 is modified to N6-carboxylysine. Residue Cys-195 participates in [2Fe-2S] cluster binding. Glu-491 provides a ligand contact to Mg(2+). The active-site Proton acceptor is Ser-517.

It belongs to the IlvD/Edd family. Homodimer. The cofactor is [2Fe-2S] cluster. Requires Mg(2+) as cofactor.

The enzyme catalyses (2R)-2,3-dihydroxy-3-methylbutanoate = 3-methyl-2-oxobutanoate + H2O. The catalysed reaction is (2R,3R)-2,3-dihydroxy-3-methylpentanoate = (S)-3-methyl-2-oxopentanoate + H2O. It participates in amino-acid biosynthesis; L-isoleucine biosynthesis; L-isoleucine from 2-oxobutanoate: step 3/4. The protein operates within amino-acid biosynthesis; L-valine biosynthesis; L-valine from pyruvate: step 3/4. Functionally, functions in the biosynthesis of branched-chain amino acids. Catalyzes the dehydration of (2R,3R)-2,3-dihydroxy-3-methylpentanoate (2,3-dihydroxy-3-methylvalerate) into 2-oxo-3-methylpentanoate (2-oxo-3-methylvalerate) and of (2R)-2,3-dihydroxy-3-methylbutanoate (2,3-dihydroxyisovalerate) into 2-oxo-3-methylbutanoate (2-oxoisovalerate), the penultimate precursor to L-isoleucine and L-valine, respectively. This chain is Dihydroxy-acid dehydratase, found in Rhodopseudomonas palustris (strain BisA53).